Consider the following 494-residue polypeptide: Rho GTPase-activating protein 19 (494 aa).

A2 bears the N-acetylalanine mark. Phosphoserine occurs at positions 7 and 31. Residues 102–308 (MSLKRKEKGV…FMIKHSQKLF (207 aa)) form the Rho-GAP domain. Positions 399–451 (QSLTQTPGREPSTPRVQKRARSRSFSGLIKRKVLGSQMTSEKKNSSPAPESVA) are disordered. Phosphoserine occurs at positions 422, 438, and 470. Phosphothreonine is present on T478.

Its function is as follows. GTPase activator for the Rho-type GTPases by converting them to an inactive GDP-bound state. This Mus musculus (Mouse) protein is Rho GTPase-activating protein 19 (Arhgap19).